The sequence spans 189 residues: MLNIVIFGAPGSGKGTQSERIVEKFGINHISTGDVLRAEIKKGTELGKTAKGYIDQGQLLPDELIIDILASTLDSFKESKGVIFDGFPRTIAQAEALKKMLAERGQEVSVMLDLDVPEEELMTRLIKRGQESGRADDNEETIKKRLVVYHSQTAPLIDWYKNEGKYQHIHGLGTMDAIFADIVAAVEKL.

11–16 contributes to the ATP binding site; that stretch reads GSGKGT. An NMP region spans residues 31 to 60; that stretch reads STGDVLRAEIKKGTELGKTAKGYIDQGQLL. AMP-binding positions include T32, R37, 58-60, 86-89, and Q93; these read QLL and GFPR. An LID region spans residues 127–137; that stretch reads KRGQESGRADD. R128 is a binding site for ATP. Residues R134 and R145 each coordinate AMP. ATP is bound at residue G173.

The protein belongs to the adenylate kinase family. As to quaternary structure, monomer.

The protein localises to the cytoplasm. The catalysed reaction is AMP + ATP = 2 ADP. It participates in purine metabolism; AMP biosynthesis via salvage pathway; AMP from ADP: step 1/1. Functionally, catalyzes the reversible transfer of the terminal phosphate group between ATP and AMP. Plays an important role in cellular energy homeostasis and in adenine nucleotide metabolism. The polypeptide is Adenylate kinase (Phocaeicola vulgatus (strain ATCC 8482 / DSM 1447 / JCM 5826 / CCUG 4940 / NBRC 14291 / NCTC 11154) (Bacteroides vulgatus)).